Here is a 110-residue protein sequence, read N- to C-terminus: UPF0060 membrane protein Ajs_2087 (110 aa).

Transmembrane regions (helical) follow at residues 7-27 (LALF…PWLW), 33-53 (SAWL…LLTL), 63-83 (AAYG…VDGV), and 86-106 (GPWD…IAFA).

It belongs to the UPF0060 family.

Its subcellular location is the cell inner membrane. This is UPF0060 membrane protein Ajs_2087 from Acidovorax sp. (strain JS42).